A 349-amino-acid chain; its full sequence is Core protein VP7 (349 aa).

An N-linked (GlcNAc...) asparagine; by host glycan is attached at asparagine 287.

Belongs to the orbivirus VP7 family. As to quaternary structure, homotrimer that assemble in a complex of 260 capsomers on an inner scaffold composed of VP3.

It is found in the virion. In terms of biological role, the VP7 protein is one of the five proteins (with VP1, VP3, VP4, and VP6) which form the inner capsid of the virus. The protein is Core protein VP7 (Segment-7) of Antilocapra americana (Pronghorn).